We begin with the raw amino-acid sequence, 482 residues long: CBL-interacting serine/threonine-protein kinase 23 (482 aa).

Positions 1–25 (MASRTTPSRSTPSRSTPSGSSSGGR) are enriched in low complexity. The interval 1–29 (MASRTTPSRSTPSRSTPSGSSSGGRTRVG) is disordered. Positions 31–286 (YELGRTLGEG…FAEVIENEWF (256 aa)) constitute a Protein kinase domain. ATP contacts are provided by residues 37 to 45 (LGEGTFAKV) and Lys60. Residue Asp154 is the Proton acceptor of the active site. An activation loop region spans residues 172–201 (DFGLSALPQQVREDGLLHTTCGTPNYVAPE). A Phosphoserine modification is found at Ser176. The residue at position 190 (Thr190) is a Phosphothreonine. Residues 328–352 (KTPVTMNAFELISTSQGLNLGSLFE) enclose the NAF domain. The interval 359–388 (KRKTRFTSKSSANEIVTKIEAAAAPMGFDV) is PPI. The disordered stretch occupies residues 459-482 (KEEGTDGGGTNGAMANRTIAKQST).

The protein belongs to the protein kinase superfamily. CAMK Ser/Thr protein kinase family. SNF1 subfamily. In terms of assembly, part of a K(+)-channel calcium-sensing kinase/phosphatase complex composed by a calcium sensor CBL (CBL1, CBL2, CBL3 or CBL9), a kinase CIPK (CIPK6, CIPK16 or CIPK23), a phosphatase PP2C (AIP1) and a K(+)-channel (AKT1). Interacts with AKT1, CBL1, CBL2, CBL3, CBL5, CBL8, CBL9 and NRT1.1. Requires Mn(2+) as cofactor. Post-translationally, autophosphorylated. As to expression, in seedlings, mostly in vascular bundles, and in roots, especially in cortex and endodermis cells. In adult plants, mostly expressed in flowers, and, to a lower extent, in roots, leaves, stems and siliques, particularly in vascular tissues. Also detected in guard cells and root hairs.

The protein resides in the cell membrane. It carries out the reaction L-seryl-[protein] + ATP = O-phospho-L-seryl-[protein] + ADP + H(+). The enzyme catalyses L-threonyl-[protein] + ATP = O-phospho-L-threonyl-[protein] + ADP + H(+). Its function is as follows. CIPK serine-threonine protein kinases interact with CBL proteins. Binding of a CBL protein to the regulatory NAF domain of CIPK protein leads to activation of the kinase in a calcium-dependent manner. Downstream of CBL1, CBL2, CBL3 and CBL9, regulates by phosphorylation the K(+) conductance and uptake of AKT1 in low K(+) condition, in response to calcium signaling and during the stomatal opening regulation by monitoring the turgor pressure in guard cells. In response to low nitrate concentration, phosphorylates NRT1.1, switching it from a low-affinity nitrate transporter to a high-affinity transporter. Confers tolerance to low potassium conditions. Involved in drought sensitivity and leaf transpiration. The sequence is that of CBL-interacting serine/threonine-protein kinase 23 (CIPK23) from Arabidopsis thaliana (Mouse-ear cress).